Consider the following 356-residue polypeptide: Phosphoribosyl pyrophosphate synthase-associated protein 1 (356 aa).

M1 carries the N-acetylmethionine modification. 2 positions are modified to phosphoserine: S177 and S215.

The protein belongs to the ribose-phosphate pyrophosphokinase family. In terms of assembly, binds to PRPS1 and PRPS2.

Its function is as follows. Seems to play a negative regulatory role in 5-phosphoribose 1-diphosphate synthesis. This is Phosphoribosyl pyrophosphate synthase-associated protein 1 (Prpsap1) from Mus musculus (Mouse).